Consider the following 98-residue polypeptide: Large ribosomal subunit protein uL23 (98 aa).

It belongs to the universal ribosomal protein uL23 family. Part of the 50S ribosomal subunit. Contacts protein L29, and trigger factor when it is bound to the ribosome.

In terms of biological role, one of the early assembly proteins it binds 23S rRNA. One of the proteins that surrounds the polypeptide exit tunnel on the outside of the ribosome. Forms the main docking site for trigger factor binding to the ribosome. The protein is Large ribosomal subunit protein uL23 of Nitrobacter winogradskyi (strain ATCC 25391 / DSM 10237 / CIP 104748 / NCIMB 11846 / Nb-255).